The sequence spans 787 residues: Mitochondrial intermediate peptidase (787 aa).

The transit peptide at 1 to 36 (MQNKVLRGILFKNVPLGYSYNRSIRHPTFGNSIIRW) directs the protein to the mitochondrion. H573 contributes to the Zn(2+) binding site. E574 is an active-site residue. Zn(2+) is bound by residues H577 and H580.

It belongs to the peptidase M3 family. Zn(2+) serves as cofactor.

The protein localises to the mitochondrion matrix. It catalyses the reaction Release of an N-terminal octapeptide as second stage of processing of some proteins imported into the mitochondrion.. Cleaves proteins, imported into the mitochondrion, to their mature size. While most mitochondrial precursor proteins are processed to the mature form in one step by mitochondrial processing peptidase (MPP), the sequential cleavage by MIP of an octapeptide after initial processing by MPP is a required step for a subgroup of nuclear-encoded precursor proteins destined for the matrix or the inner membrane. The sequence is that of Mitochondrial intermediate peptidase (OCT1) from Vanderwaltozyma polyspora (strain ATCC 22028 / DSM 70294 / BCRC 21397 / CBS 2163 / NBRC 10782 / NRRL Y-8283 / UCD 57-17) (Kluyveromyces polysporus).